Here is an 888-residue protein sequence, read N- to C-terminus: Endochitinase A1 (888 aa).

A signal peptide spans 1–22 (MVSSKLSFVATAVAALAPLASA). One can recognise a GH18 domain in the interval 29 to 338 (SNLAIYWGQG…DHMKDILLHC (310 aa)). E174 functions as the Proton donor in the catalytic mechanism. Disordered regions lie at residues 338–631 (CDPS…TTTA), 743–799 (PVTE…VSTS), and 813–855 (PLIL…YTQE). Low complexity predominate over residues 344 to 617 (VTSSSAIPSS…STDESSTTVG (274 aa)). A glycan (N-linked (GlcNAc...) asparagine) is linked at N622. Polar residues predominate over residues 764 to 775 (EGSNPTQPSGAS). An N-linked (GlcNAc...) asparagine glycan is attached at N780. The segment covering 835-855 (PSGQNSGSSSHVPIPPSYTQE) has biased composition (polar residues). The GPI-anchor amidated glycine moiety is linked to residue G863. Positions 864 to 888 (AASRVTGLGHGLVLTVLTLSAFFVL) are cleaved as a propeptide — removed in mature form.

The protein belongs to the glycosyl hydrolase 18 family. Chitinase class III subfamily.

It localises to the cell membrane. The protein resides in the secreted. Its subcellular location is the cell wall. It catalyses the reaction Random endo-hydrolysis of N-acetyl-beta-D-glucosaminide (1-&gt;4)-beta-linkages in chitin and chitodextrins.. Its activity is regulated as follows. The cyclic peptide natural product argifin acts as a specific inhibitor. In terms of biological role, GPI-anchored chitinase involved in the degradation of chitin, a component of the cell walls of fungi and exoskeletal elements of some animals (including worms and arthropods). Required to reshape the cell wall at the sites where cell wall remodeling and/or cell wall maturation actively take place such as sites of conidia formation. This Aspergillus fumigatus (strain ATCC MYA-4609 / CBS 101355 / FGSC A1100 / Af293) (Neosartorya fumigata) protein is Endochitinase A1 (chiA1).